The chain runs to 631 residues: Glutamyl-tRNA(Gln) amidotransferase subunit E (631 aa).

The protein belongs to the GatB/GatE family. GatE subfamily. Heterodimer of GatD and GatE.

It carries out the reaction L-glutamyl-tRNA(Gln) + L-glutamine + ATP + H2O = L-glutaminyl-tRNA(Gln) + L-glutamate + ADP + phosphate + H(+). In terms of biological role, allows the formation of correctly charged Gln-tRNA(Gln) through the transamidation of misacylated Glu-tRNA(Gln) in organisms which lack glutaminyl-tRNA synthetase. The reaction takes place in the presence of glutamine and ATP through an activated gamma-phospho-Glu-tRNA(Gln). The GatDE system is specific for glutamate and does not act on aspartate. This is Glutamyl-tRNA(Gln) amidotransferase subunit E from Methanococcus maripaludis (strain DSM 14266 / JCM 13030 / NBRC 101832 / S2 / LL).